A 145-amino-acid chain; its full sequence is Deoxyuridine 5'-triphosphate nucleotidohydrolase (145 aa).

Substrate contacts are provided by residues 64-66 (RSG), Asn77, 81-83 (TID), and Met91.

Belongs to the dUTPase family. Requires Mg(2+) as cofactor.

The enzyme catalyses dUTP + H2O = dUMP + diphosphate + H(+). The protein operates within pyrimidine metabolism; dUMP biosynthesis; dUMP from dCTP (dUTP route): step 2/2. This enzyme is involved in nucleotide metabolism: it produces dUMP, the immediate precursor of thymidine nucleotides and it decreases the intracellular concentration of dUTP so that uracil cannot be incorporated into DNA. This is Deoxyuridine 5'-triphosphate nucleotidohydrolase from Leptospira borgpetersenii serovar Hardjo-bovis (strain JB197).